Reading from the N-terminus, the 1094-residue chain is Probable serine/threonine-protein kinase kinX (1094 aa).

In terms of domain architecture, Protein kinase spans 22–281 (LDFISEIGSG…QTLKQIKTTL (260 aa)). ATP-binding positions include 28–36 (IGSGGFGKV) and Lys-49. The active-site Proton acceptor is Asp-146. Disordered stretches follow at residues 301 to 884 (TTNG…SVED) and 946 to 1083 (IKVE…PNNK). Positions 330–344 (YDDDDDDDDDDDDND) are enriched in acidic residues. The span at 351–373 (SDNSNSNVTLESNSNYNSSTING) shows a compositional bias: polar residues. A compositionally biased stretch (low complexity) spans 374 to 387 (QEQQEQQEQQQQQQ). Residues 393 to 408 (DEGEIEQDDDNIEVYD) show a composition bias toward acidic residues. Positions 410–424 (DYQKKLEEHQKELLE) are enriched in basic and acidic residues. Composition is skewed to acidic residues over residues 433–454 (STDENEVYEQEEEEEEEDEEEQ), 480–496 (DDEDDDDDEEDEEEGDE), and 503–523 (DFDEDDEDDEEYDEDEDDEDE). Composition is skewed to low complexity over residues 526 to 542 (IQYYQQQLQYQQQLQKQ) and 564 to 585 (RQLQQQQQQQQQQQQQQQQHQQ). Positions 587-602 (YDDDDDDDDEEEEEYD) are enriched in acidic residues. A compositionally biased stretch (basic and acidic residues) spans 603–639 (DVIRHDTDSEEESKDKTPLPWDQHFEKQKESENKVEQ). The segment covering 650–661 (QETEQQQQQQQQ) has biased composition (low complexity). Over residues 670–801 (PTKVEDVKVE…EPVEEVKVEE (132 aa)) the composition is skewed to basic and acidic residues. Residues 676 to 978 (VKVETEEQTK…PVKVEVASPV (303 aa)) form a 40 X 9 AA approximate repeats of V-K-V-E-E-P-V-E-E region. The span at 802 to 816 (PVEEVEAEESVQEPV) shows a compositional bias: acidic residues. Basic and acidic residues-rich tracts occupy residues 817–884 (EEVK…SVED) and 946–971 (IKVEEPIKVEEPIKVEEPIKVEEPVK). Low complexity-rich tracts occupy residues 972–985 (VEVASPVVQEQPPQ) and 992–1011 (VVSTSTITIASSPQQSSNSP). Polar residues predominate over residues 1016-1031 (VKQPQQQEIEVNSTPI). Residues 1032–1050 (KQQQQQQQTPTQQTQTPTK) show a composition bias toward low complexity.

This sequence belongs to the protein kinase superfamily. TKL Ser/Thr protein kinase family.

It carries out the reaction L-seryl-[protein] + ATP = O-phospho-L-seryl-[protein] + ADP + H(+). The enzyme catalyses L-threonyl-[protein] + ATP = O-phospho-L-threonyl-[protein] + ADP + H(+). The chain is Probable serine/threonine-protein kinase kinX (kinX) from Dictyostelium discoideum (Social amoeba).